The primary structure comprises 92 residues: UPF0358 protein SH1840 (92 aa).

It belongs to the UPF0358 family.

The sequence is that of UPF0358 protein SH1840 from Staphylococcus haemolyticus (strain JCSC1435).